Consider the following 198-residue polypeptide: Acyl carrier protein phosphodiesterase (198 aa).

This sequence belongs to the AcpH family.

It carries out the reaction holo-[ACP] + H2O = apo-[ACP] + (R)-4'-phosphopantetheine + H(+). Converts holo-ACP to apo-ACP by hydrolytic cleavage of the phosphopantetheine prosthetic group from ACP. The protein is Acyl carrier protein phosphodiesterase of Photorhabdus laumondii subsp. laumondii (strain DSM 15139 / CIP 105565 / TT01) (Photorhabdus luminescens subsp. laumondii).